The following is a 460-amino-acid chain: 7-cyano-7-deazaguanine synthase 2 (460 aa).

Cys2 functions as the For GATase activity in the catalytic mechanism. The region spanning 2–225 (CSVTGVLIIK…PYSIVEVNDN (224 aa)) is the Glutamine amidotransferase type-2 domain. 245–255 (ASGGLDSTVAA) contacts ATP. Positions 426, 434, 437, and 440 each coordinate Zn(2+).

The protein belongs to the QueC family. Requires Zn(2+) as cofactor.

The catalysed reaction is 7-carboxy-7-deazaguanine + NH4(+) + ATP = 7-cyano-7-deazaguanine + ADP + phosphate + H2O + H(+). Its pathway is purine metabolism; 7-cyano-7-deazaguanine biosynthesis. Catalyzes the ATP-dependent conversion of 7-carboxy-7-deazaguanine (CDG) to 7-cyano-7-deazaguanine (preQ(0)). This chain is 7-cyano-7-deazaguanine synthase 2 (queC2), found in Sulfurisphaera tokodaii (strain DSM 16993 / JCM 10545 / NBRC 100140 / 7) (Sulfolobus tokodaii).